The following is a 1052-amino-acid chain: Membrane-bound transcription factor site-1 protease (1052 aa).

The N-terminal stretch at 1-17 (MKLINIWLLLLVVLLCG) is a signal peptide. Positions 18–186 (KKHLGDRLGK…TGRHSSRRLL (169 aa)) are excised as a propeptide. Asn148 carries an N-linked (GlcNAc...) asparagine glycan. Position 168 is a phosphoserine (Ser168). Residues 187–999 (RAIPRQVAQT…MPGRYNQEVG (813 aa)) lie on the Lumenal side of the membrane. The 283-residue stretch at 190–472 (PRQVAQTLQA…HGKLDLLRAY (283 aa)) folds into the Peptidase S8 domain. The active-site Charge relay system is Asp218. N-linked (GlcNAc...) asparagine glycosylation is present at Asn236. Residue His249 is the Charge relay system of the active site. N-linked (GlcNAc...) asparagine glycosylation is present at Asn305. Ser414 functions as the Charge relay system in the catalytic mechanism. Asn515 and Asn728 each carry an N-linked (GlcNAc...) asparagine glycan. Polar residues predominate over residues 877 to 887 (PSLSHSGNRQR). The tract at residues 877-900 (PSLSHSGNRQRPPSGAGLAPPERM) is disordered. A glycan (N-linked (GlcNAc...) asparagine) is linked at Asn939. Residues 1000–1022 (QTIPVFAFLGAMVALAFFVVQIS) traverse the membrane as a helical segment. The Cytoplasmic segment spans residues 1023–1052 (KAKSRPKRRRPRAKRPQLTQQTHPPRTPSV). The segment covering 1025-1037 (KSRPKRRRPRAKR) has biased composition (basic residues). A disordered region spans residues 1025-1052 (KSRPKRRRPRAKRPQLTQQTHPPRTPSV).

The protein belongs to the peptidase S8 family. Requires Ca(2+) as cofactor. Post-translationally, the 148 kDa zymogen is processed progressively into two membrane-bound 120 and 106 kDa forms in the endoplasmic reticulum, and late into a secreted 98 kDa form. The propeptide is autocatalytically removed through an intramolecular cleavage after Leu-186. Further cleavage generates 14, 10, and 8 kDa intermediates.

It is found in the endoplasmic reticulum membrane. The protein localises to the golgi apparatus membrane. The enzyme catalyses Processes precursors containing basic and hydrophobic/aliphatic residues at P4 and P2, respectively, with a relatively relaxed acceptance of amino acids at P1 and P3.. With respect to regulation, inhibited by divalent copper and zinc ions, but not by nickel or cobalt. Inhibited by its prosegment, but not smaller fragments. Inhibited by 4-(2-aminoethyl)benzenesulfonyl fluoride (AEBSF), a serine protease inhibitor. Serine protease that cleaves after hydrophobic or small residues, provided that Arg or Lys is in position P4: known substrates include SREBF1/SREBP1, SREBF2/SREBP2, BDNF, GNPTAB, ATF6, ATF6B and FAM20C. Cleaves substrates after Arg-Ser-Val-Leu (SREBP2), Arg-His-Leu-Leu (ATF6), Arg-Gly-Leu-Thr (BDNF) and its own propeptide after Arg-Arg-Leu-Leu. Catalyzes the first step in the proteolytic activation of the sterol regulatory element-binding proteins (SREBPs) SREBF1/SREBP1 and SREBF2/SREBP2. Also mediates the first step in the proteolytic activation of the cyclic AMP-dependent transcription factor ATF-6 (ATF6 and ATF6B). Mediates the protein cleavage of GNPTAB into subunit alpha and beta, thereby participating in biogenesis of lysosomes. Cleaves the propeptide from FAM20C which is required for FAM20C secretion from the Golgi apparatus membrane and for enhancement of FAM20C kinase activity, promoting osteoblast differentiation and biomineralization. Involved in the regulation of M6P-dependent Golgi-to-lysosome trafficking of lysosomal enzymes. It is required for the activation of CREB3L2/BBF2H7, a transcriptional activator of MIA3/TANGO and other genes controlling mega vesicle formation. Therefore, it plays a key role in the regulation of mega vesicle-mediated collagen trafficking. In astrocytes and osteoblasts, upon DNA damage and ER stress, mediates the first step of the regulated intramembrane proteolytic activation of the transcription factor CREB3L1, leading to the inhibition of cell-cycle progression. This chain is Membrane-bound transcription factor site-1 protease, found in Cricetulus griseus (Chinese hamster).